The sequence spans 948 residues: Coatomer subunit beta-2 (948 aa).

HEAT repeat units follow at residues 49-87 (ETIP…TDSK), 92-126 (PEMI…MKET), 127-164 (EIVE…LPHG), 274-311 (TAIR…TLHR), 312-349 (DIMV…HHNI), and 391-428 (EVAS…TNPK).

Oligomeric complex that consists of at least the alpha, beta, beta', gamma, delta, epsilon and zeta subunits.

It localises to the cytoplasm. Its subcellular location is the golgi apparatus membrane. The protein localises to the cytoplasmic vesicle. The protein resides in the COPI-coated vesicle membrane. Its function is as follows. The coatomer is a cytosolic protein complex that binds to dilysine motifs and reversibly associates with Golgi non-clathrin-coated vesicles, which further mediate biosynthetic protein transport from the ER, via the Golgi up to the trans Golgi network. Coatomer complex is required for budding from Golgi membranes, and is essential for the retrograde Golgi-to-ER transport of dilysine-tagged proteins. This is Coatomer subunit beta-2 from Arabidopsis thaliana (Mouse-ear cress).